A 290-amino-acid polypeptide reads, in one-letter code: MKPPEHSLIIISGLSGSGKSVALKTFEDLDYYCSDNLPVELLPHFLRRRLRVAELSDQRIAIGIDIRSGSNISELDQWRHTAKHYNIKAHLLFFDASNETLLKRYADTRRRHPLSHLGLSLPEAIALERELTAPLREAAEAVIDTSTFNVHQLRRHVVTEFALTHSDKLSLLFESFAYKRGVPTEADFVFDARILPNPHWEPELRSLTGRDSNVRDYMEQQPDVILYLTQITEFLDTWLARLQADTRSYVTVAFGCTGGKHRSVYLAEQMARHAREKGWSEVATFHRELE.

13-20 (GLSGSGKS) provides a ligand contact to ATP. 65–68 (DIRS) contributes to the GTP binding site.

Belongs to the RapZ-like family.

Functionally, displays ATPase and GTPase activities. The sequence is that of Nucleotide-binding protein XfasM23_0667 from Xylella fastidiosa (strain M23).